We begin with the raw amino-acid sequence, 550 residues long: MGNCCVTPEGSGRGRKKQQQEQKQKQKEPKQQQQQQKKGKKPNPFSIEYNRSSAPSGHRLVVLREPTGRDIAARYELGGELGRGEFGVTYLCTERETGDAYACKSISKKKLRTAVDIEDVRREVDIMRHLPKHPNIVTLRDTYEDDNAVHLVMELCEGGELFDRIVARGHYTERAAALVTRTIVEVVQMCHKHGVMHRDLKPENFLFANKKETAALKAIDFGLSVFFTPGERFTEIVGSPYYMAPEVLKRNYGPEVDVWSAGVILYILLCGVPPFWAETEQGVAQAIIRSVIDFKRDPWPRVSDNAKDLVKGMLNPDPRRRLNAQQVLDHPWLQNIKKAPNVNLGETVKARLQQFSVMNKFKKHALRVIAEHLSVEEVAGIKDMFEKMDLNKDNMINFDELKLGLHKLGHQMADADVQILMDAADVDGNGSLDYGEFVALSVHLRKIGNDEHLHKAFAYFDRNQSGYIEIDELRESLADDLGANHEEVINAIIRDVDTDKDGKISYDEFAAMMKAGTDWRKASRQYSRERFTSLSLKLQKDGSLQLTTTQ.

The tract at residues 1–58 (MGNCCVTPEGSGRGRKKQQQEQKQKQKEPKQQQQQQKKGKKPNPFSIEYNRSSAPSGH) is disordered. G2 carries the N-myristoyl glycine lipid modification. The segment covering 18-30 (QQQEQKQKQKEPK) has biased composition (basic and acidic residues). One can recognise a Protein kinase domain in the interval 75–333 (YELGGELGRG…AQQVLDHPWL (259 aa)). ATP contacts are provided by residues 81–89 (LGRGEFGVT) and K104. The active-site Proton acceptor is D199. Residues 339–369 (APNVNLGETVKARLQQFSVMNKFKKHALRVI) form an autoinhibitory domain region. EF-hand domains follow at residues 376–411 (EEVA…LGHQ), 412–447 (MADA…LRKI), 448–483 (GNDE…DLGA), and 484–519 (NHEE…GTDW). Ca(2+) is bound by residues D389, N391, D393, M395, E400, D425, D427, N429, S431, E436, D461, N463, S465, Y467, E472, D497, D499, D501, K503, and E508.

Belongs to the protein kinase superfamily. Ser/Thr protein kinase family. CDPK subfamily. As to expression, expressed in roots and leaf blades.

It is found in the membrane. The catalysed reaction is L-seryl-[protein] + ATP = O-phospho-L-seryl-[protein] + ADP + H(+). It catalyses the reaction L-threonyl-[protein] + ATP = O-phospho-L-threonyl-[protein] + ADP + H(+). Its activity is regulated as follows. Activated by calcium. Autophosphorylation may play an important role in the regulation of the kinase activity. Functionally, may play a role in signal transduction pathways that involve calcium as a second messenger. This is Calcium-dependent protein kinase 20 from Oryza sativa subsp. japonica (Rice).